We begin with the raw amino-acid sequence, 271 residues long: MSKRLLLFDFDETYFKHNTNEEDLSHLREMEKLLEKLTNNNEVITVVLTGSTFQSVMDKMDQVNMTFKPLHIFSDLSSKMFTWNNGEYVESETYKKKVLSEPFLFEDIEDILHHISAQYNVEFIPQRAFEGNETHYNFYFHSTGNHNNDRRILEVLVRYANDQNYTARFSRSNPLAGDPENAYDIDFTPSNAGKLYATQFLMKKYNIPVKSILGFGDSGNDEAYLSYLEHAYLMSNSRDEALKQKFRLTKYPYYQGITLHVKEFVEGKYDY.

This sequence belongs to the HAD-like hydrolase superfamily.

This is an uncharacterized protein from Staphylococcus aureus (strain MRSA252).